The chain runs to 136 residues: Transmembrane protein 203 (136 aa).

4 consecutive transmembrane segments (helical) span residues 14 to 34 (FAQL…VLLA), 50 to 72 (FIPF…VRLF), 81 to 101 (VLRL…EMLL), and 112 to 132 (LWYG…MIRA).

Its subcellular location is the endoplasmic reticulum membrane. The protein resides in the endoplasmic reticulum-Golgi intermediate compartment. Its function is as follows. Involved in the regulation of cellular calcium homeotasis. May act as a regulator of STING-mediated inflammatory signaling in macrophages. This chain is Transmembrane protein 203 (tmem203), found in Xenopus laevis (African clawed frog).